Here is a 383-residue protein sequence, read N- to C-terminus: NifS-like protein (383 aa).

Pyridoxal 5'-phosphate contacts are provided by residues 58–59 (SE) and 184–186 (SLN).

This sequence belongs to the class-V pyridoxal-phosphate-dependent aminotransferase family. NifS/IscS subfamily. Pyridoxal 5'-phosphate is required as a cofactor.

It localises to the virion. The polypeptide is NifS-like protein (African swine fever virus (isolate Pig/Kenya/KEN-50/1950) (ASFV)).